Here is a 264-residue protein sequence, read N- to C-terminus: S-adenosylmethionine decarboxylase proenzyme (264 aa).

The Schiff-base intermediate with substrate; via pyruvic acid role is filled by Ser113. Pyruvic acid (Ser); by autocatalysis is present on Ser113. His118 (proton acceptor; for processing activity) is an active-site residue. Cys141 (proton donor; for catalytic activity) is an active-site residue.

The protein belongs to the prokaryotic AdoMetDC family. Type 2 subfamily. As to quaternary structure, heterooctamer of four alpha and four beta chains arranged as a tetramer of alpha/beta heterodimers. Pyruvate serves as cofactor. Post-translationally, is synthesized initially as an inactive proenzyme. Formation of the active enzyme involves a self-maturation process in which the active site pyruvoyl group is generated from an internal serine residue via an autocatalytic post-translational modification. Two non-identical subunits are generated from the proenzyme in this reaction, and the pyruvate is formed at the N-terminus of the alpha chain, which is derived from the carboxyl end of the proenzyme. The post-translation cleavage follows an unusual pathway, termed non-hydrolytic serinolysis, in which the side chain hydroxyl group of the serine supplies its oxygen atom to form the C-terminus of the beta chain, while the remainder of the serine residue undergoes an oxidative deamination to produce ammonia and the pyruvoyl group blocking the N-terminus of the alpha chain.

It carries out the reaction S-adenosyl-L-methionine + H(+) = S-adenosyl 3-(methylsulfanyl)propylamine + CO2. The protein operates within amine and polyamine biosynthesis; S-adenosylmethioninamine biosynthesis; S-adenosylmethioninamine from S-adenosyl-L-methionine: step 1/1. In terms of biological role, catalyzes the decarboxylation of S-adenosylmethionine to S-adenosylmethioninamine (dcAdoMet), the propylamine donor required for the synthesis of the polyamines spermine and spermidine from the diamine putrescine. The sequence is that of S-adenosylmethionine decarboxylase proenzyme from Pseudomonas syringae pv. tomato (strain ATCC BAA-871 / DC3000).